A 38-amino-acid polypeptide reads, in one-letter code: Tyrosinase inhibitor (38 aa).

3 disulfides stabilise this stretch: Cys11-Cys25, Cys18-Cys29, and Cys24-Cys36. A 3',4'-dihydroxyphenylalanine modification is found at Tyr32.

As to quaternary structure, monomer. In terms of processing, contains L-DOPA (3',4'-dihydroxyphenylalanine).

The protein localises to the secreted. In terms of biological role, potent reversible, competitive inhibitor of tyrosinase (phenol oxidase) in the nanomolar range. This chain is Tyrosinase inhibitor, found in Musca domestica (House fly).